The chain runs to 453 residues: Ubiquitin-associated protein 1 (453 aa).

The UMA domain occupies 19–65 (LDDVPFKLNEKFRCPSKVGLPIGFCLSDCNAILSDLQYDFNLERRTV). The segment covering 83 to 93 (EAIRTDSESER) has biased composition (basic and acidic residues). Disordered stretches follow at residues 83 to 119 (EAIR…QDIV), 189 to 223 (LQSQ…AKTG), and 260 to 335 (FPKL…AGTT). The segment covering 189 to 199 (LQSQPQSSVSP) has biased composition (low complexity). Polar residues predominate over residues 285–328 (NLSNGTPPSLQRTASNNNTTLPQEQPVFAQNGTPKQSNPVTVTS). UBA domains lie at 340–381 (SPSE…LFTH) and 403–449 (GSEE…LMTR).

Component of an ESCRT-I complex (endosomal sorting complex required for transport I).

The protein resides in the cytoplasm. The protein localises to the cytosol. Its subcellular location is the endosome. Component of the ESCRT-I complex, a regulator of vesicular trafficking process. Binds to ubiquitinated cargo proteins and is required for the sorting of endocytic ubiquitinated cargos into multivesicular bodies (MVBs). This is Ubiquitin-associated protein 1 from Danio rerio (Zebrafish).